Here is a 328-residue protein sequence, read N- to C-terminus: MDMISGSTAATSTPHNNQQAVMLSSPIIKEEARDPKQTRAMPQIGGSGERKPRPQLPEALKCPRCDSNNTKFCYYNNYSMSQPRYFCKACRRYWTHGGTLRNVPIGGGCRKNKHASRFVLGSHTSSSSSATYAPLSPSTNASSSNMSINKHMMMVPNMTMPTPTTMGLFPNVLPTLMPTGGGGGFDFTMDNQHRSLSFTPMSLPSQGPVPMLAAGGSEATPSFLEMLRGGIFHGSSSYNTSLTMSGGNNGMDKPFSLPSYGAMCTNGLSGSTTNDARQLVGPQQDNKAIMKSSNNNNGVSLLNLYWNKHNNNNNNNNNNNNNNNNKGQ.

Residues 33–56 (RDPKQTRAMPQIGGSGERKPRPQL) are disordered. The segment at 60 to 114 (LKCPRCDSNNTKFCYYNNYSMSQPRYFCKACRRYWTHGGTLRNVPIGGGCRKNKH) adopts a Dof-type zinc-finger fold. Cysteine 62, cysteine 65, cysteine 87, and cysteine 90 together coordinate Zn(2+). 2 disordered regions span residues 124-144 (TSSS…ASSS) and 306-328 (WNKH…NKGQ).

As to quaternary structure, interacts with the bZIP transcription factor Opaque-2/O2. As to expression, seed endosperm.

The protein localises to the nucleus. Functionally, transcription factor that binds specifically to a 5'-AA[AG]G-3' consensus core sequence. May enhance the DNA binding of the bZIP transcription factor Opaque-2 to O2 binding site elements. The sequence is that of Dof zinc finger protein PBF (PBF) from Zea mays (Maize).